Here is a 46-residue protein sequence, read N- to C-terminus: MESTSPALSVSIAVLTALLGLTGFGIYTAFGPPSRQLDDPFDDHDD.

Residues 10 to 30 (VSIAVLTALLGLTGFGIYTAF) form a helical membrane-spanning segment.

The protein belongs to the PsbN family.

The protein resides in the cellular thylakoid membrane. Its function is as follows. May play a role in photosystem I and II biogenesis. This is Protein PsbN from Synechococcus sp. (strain RCC307).